A 318-amino-acid polypeptide reads, in one-letter code: tRNA pseudouridine synthase B (318 aa).

Catalysis depends on Asp-47, which acts as the Nucleophile.

This sequence belongs to the pseudouridine synthase TruB family. Type 1 subfamily.

It carries out the reaction uridine(55) in tRNA = pseudouridine(55) in tRNA. In terms of biological role, responsible for synthesis of pseudouridine from uracil-55 in the psi GC loop of transfer RNAs. This chain is tRNA pseudouridine synthase B, found in Colwellia psychrerythraea (strain 34H / ATCC BAA-681) (Vibrio psychroerythus).